We begin with the raw amino-acid sequence, 498 residues long: Type VI secretion system sheath protein TssC1 (498 aa).

As to quaternary structure, forms a heterodimer with TssB1. Heterodimers assemble to form the sheath of the T6SS machinery. Interacts with TssA1.

Its function is as follows. Core component of the H1 type VI (H1-T6SS) secretion system that plays a role in the release of toxins targeting both eukaryotic and prokaryotic species. Forms the sheath of the structure by assembling into tubules together with TssB1 resulting in the stacking of cogwheel-like structures showing predominantly a 12-fold symmetry. The sheath contracts to provide the energy needed for effector delivery. This Pseudomonas aeruginosa (strain ATCC 15692 / DSM 22644 / CIP 104116 / JCM 14847 / LMG 12228 / 1C / PRS 101 / PAO1) protein is Type VI secretion system sheath protein TssC1.